Consider the following 185-residue polypeptide: Peptide deformylase (185 aa).

Residues cysteine 94 and histidine 136 each contribute to the Fe cation site. Glutamate 137 is a catalytic residue. Histidine 140 provides a ligand contact to Fe cation.

Belongs to the polypeptide deformylase family. Fe(2+) serves as cofactor.

The catalysed reaction is N-terminal N-formyl-L-methionyl-[peptide] + H2O = N-terminal L-methionyl-[peptide] + formate. Removes the formyl group from the N-terminal Met of newly synthesized proteins. Requires at least a dipeptide for an efficient rate of reaction. N-terminal L-methionine is a prerequisite for activity but the enzyme has broad specificity at other positions. This is Peptide deformylase from Chlorobium phaeobacteroides (strain BS1).